We begin with the raw amino-acid sequence, 398 residues long: Serpin-Z2B (398 aa).

Residues Gly343 to Phe367 are RCL.

It belongs to the serpin family.

Functionally, inhibits chymotrypsin, cathepsin G and trypsin in vitro. This Triticum aestivum (Wheat) protein is Serpin-Z2B.